A 378-amino-acid chain; its full sequence is MADGLRVALVAGEASGDILGSGLMQALRARHPDIEFIGVGGPRMEAEGLSSYFPMERLSVMGLVEVLGRLPELLRRRKRLIRTLIEARPDVMIGIDAPDFTLGVEHKLRQAGLRTVHYVSPSVWAWRQKRVLKIREACDLMLALFPFEARFYEEHGVPVRFVGHPLANTIPLQADRAAARARLGLPADGQVVALMPGSRGGEVGKLGALFLDTAQRLLVERPGLRFVLPCASAARREQIEQMLQGREPLPLTLLDGASHEALAACDAVLIASGTATLEALLYKRPMVVAYRVAGLTYRILKRLVKSPYISLPNLLAGRLLVPELIQDAATPQALAATLSPLLDDGSQQVEFFDAIHRALRQDASAQAAEAVLQLVERR.

It belongs to the LpxB family.

The enzyme catalyses a lipid X + a UDP-2-N,3-O-bis[(3R)-3-hydroxyacyl]-alpha-D-glucosamine = a lipid A disaccharide + UDP + H(+). It functions in the pathway bacterial outer membrane biogenesis; LPS lipid A biosynthesis. Condensation of UDP-2,3-diacylglucosamine and 2,3-diacylglucosamine-1-phosphate to form lipid A disaccharide, a precursor of lipid A, a phosphorylated glycolipid that anchors the lipopolysaccharide to the outer membrane of the cell. The polypeptide is Lipid-A-disaccharide synthase (Pseudomonas aeruginosa (strain UCBPP-PA14)).